The sequence spans 444 residues: 23S rRNA (uracil(1939)-C(5))-methyltransferase RlmD (444 aa).

Positions 5-67 (RNRLDRTPFQ…RHFDEAKTVE (63 aa)) constitute a TRAM domain. The [4Fe-4S] cluster site is built by Cys80, Cys86, Cys89, and Cys168. S-adenosyl-L-methionine contacts are provided by Gln276, Phe305, Asn310, Glu326, Asp353, and Asp374. Cys400 functions as the Nucleophile in the catalytic mechanism.

Belongs to the class I-like SAM-binding methyltransferase superfamily. RNA M5U methyltransferase family. RlmD subfamily.

It carries out the reaction uridine(1939) in 23S rRNA + S-adenosyl-L-methionine = 5-methyluridine(1939) in 23S rRNA + S-adenosyl-L-homocysteine + H(+). Its function is as follows. Catalyzes the formation of 5-methyl-uridine at position 1939 (m5U1939) in 23S rRNA. This Xanthomonas euvesicatoria pv. vesicatoria (strain 85-10) (Xanthomonas campestris pv. vesicatoria) protein is 23S rRNA (uracil(1939)-C(5))-methyltransferase RlmD.